The sequence spans 202 residues: GMP synthase [glutamine-hydrolyzing] subunit A (202 aa).

A Glutamine amidotransferase type-1 domain is found at 4–194 (KIYVVDNGGQ…IAICQQHKEK (191 aa)). Cys81 (nucleophile) is an active-site residue. Active-site residues include His168 and Glu170.

As to quaternary structure, heterodimer composed of a glutamine amidotransferase subunit (A) and a GMP-binding subunit (B).

It catalyses the reaction XMP + L-glutamine + ATP + H2O = GMP + L-glutamate + AMP + diphosphate + 2 H(+). Its pathway is purine metabolism; GMP biosynthesis; GMP from XMP (L-Gln route): step 1/1. Its function is as follows. Catalyzes the synthesis of GMP from XMP. The sequence is that of GMP synthase [glutamine-hydrolyzing] subunit A from Thermoplasma volcanium (strain ATCC 51530 / DSM 4299 / JCM 9571 / NBRC 15438 / GSS1).